Reading from the N-terminus, the 2005-residue chain is Sodium channel protein type 2 subunit alpha (2005 aa).

The Cytoplasmic portion of the chain corresponds to 1-129 (MARSVLVPPG…KLAIKILVHS (129 aa)). Ser-4 carries the phosphoserine modification. Residues 28-61 (RIAEEKAKRPKQERKDEDDENGPKPNSDLEAGKS) form a disordered region. Residue Lys-38 forms a Glycyl lysine isopeptide (Lys-Gly) (interchain with G-Cter in SUMO1) linkage. The stretch at 111 to 456 (ILTPFNPIRK…QQMLEQLKKQ (346 aa)) is one I repeat. Residues 130–148 (LFNVLIMCTILTNCVFMTM) form a helical membrane-spanning segment. Residues 149–155 (SNPPDWT) are Extracellular-facing. Residues 156–176 (KNVEYTFTGIYTFESLIKILA) traverse the membrane as a helical segment. The Cytoplasmic segment spans residues 177 to 190 (RGFCLEDFTFLRNP). A helical membrane pass occupies residues 191–208 (WNWLDFTVITFAYVTEFV). Topologically, residues 209–214 (NLGNVS) are extracellular. N-linked (GlcNAc...) asparagine glycosylation occurs at Asn-212. Residues 215 to 231 (ALRTFRVLRALKTISVI) traverse the membrane as a helical segment. Residues 232–250 (PGLKTIVGALIQSVKKLSD) lie on the Cytoplasmic side of the membrane. A helical transmembrane segment spans residues 251–270 (VMILTVFCLSVFALIGLQLF). Residues 271–369 (MGNLRNKCLQ…PNYGYTSFDT (99 aa)) lie on the Extracellular side of the membrane. Cys-278 and Cys-338 are disulfide-bonded. N-linked (GlcNAc...) asparagine glycans are attached at residues Asn-285, Asn-291, Asn-297, Asn-303, Asn-308, and Asn-340. The pore-forming intramembrane region spans 370–394 (FSWAFLSLFRLMTQDFWENLYQLTL). The Extracellular portion of the chain corresponds to 395 to 401 (RAAGKTY). Residues 402–422 (MIFFVLVIFLGSFYLINLILA) form a helical membrane-spanning segment. Topologically, residues 423–759 (VVAMAYEEQN…HVVNLVVMDP (337 aa)) are cytoplasmic. A phosphoserine mark is found at Ser-468, Ser-471, Ser-484, Ser-526, Ser-528, Ser-531, Ser-553, Ser-554, and Ser-558. The interval 494-529 (SSKSEKELKNRRKKKKQKEQAGEEEKEDAVRKSASE) is disordered. Residues 511–529 (KEQAGEEEKEDAVRKSASE) are compositionally biased toward basic and acidic residues. Ser-554 carries the phosphoserine; by PKC; in vitro modification. Ser-573 and Ser-576 each carry phosphoserine; by PKC; in vitro. Phosphoserine occurs at positions 589, 610, 623, 687, 688, and 721. Residues 591–634 (NDFADDEHSTFEDNDSRRDSLFVPHRHGERRPSNVSQASRASRG) are disordered. Residues 596 to 610 (DEHSTFEDNDSRRDS) show a composition bias toward basic and acidic residues. An II repeat occupies 741-1013 (CCKPWLKVKH…QIAVGRMQKG (273 aa)). Residues 760–778 (FVDLAITICIVLNTLFMAM) traverse the membrane as a helical segment. Topologically, residues 779-789 (EHYPMTEQFSS) are extracellular. Residues 790–809 (VLSVGNLVFTGIFTAEMFLK) traverse the membrane as a helical segment. The Cytoplasmic segment spans residues 810–823 (IIAMDPYYYFQEGW). A helical transmembrane segment spans residues 824–843 (NIFDGFIVSLSLMELGLANV). Topologically, residues 844-845 (EG) are extracellular. A helical transmembrane segment spans residues 846–863 (LSVLRSFRLLRVFKLAKS). Topologically, residues 864–879 (WPTLNMLIKIIGNSVG) are cytoplasmic. Residues 880–898 (ALGNLTLVLAIIVFIFAVV) form a helical membrane-spanning segment. The Extracellular segment spans residues 899–927 (GMQLFGKSYKECVCKISNDCELPRWHMHH). Cys-912 and Cys-918 form a disulfide bridge. The interval 917–918 (DC) is binds SCN2B. An intramembrane region (pore-forming) is located at residues 928-948 (FFHSFLIVFRVLCGEWIETMW). Topologically, residues 949–961 (DCMEVAGQTMCLT) are extracellular. The cysteines at positions 950 and 959 are disulfide-linked. A helical membrane pass occupies residues 962–982 (VFMMVMVIGNLVVLNLFLALL). Residues 983 to 1209 (LSSFSSDNLA…TCYKIVEHNW (227 aa)) lie on the Cytoplasmic side of the membrane. The disordered stretch occupies residues 1120 to 1166 (EEFSSESDMEESKEKLNATSSSEGSTVDIGAPAEGEQPEAEPEESLE). Residues 1155 to 1166 (EQPEAEPEESLE) show a composition bias toward acidic residues. The III repeat unit spans residues 1190–1504 (KGKLWWNLRK…KKYYNAMKKL (315 aa)). The helical transmembrane segment at 1210–1227 (FETFIVFMILLSSGALAF) threads the bilayer. Over 1228–1240 (EDIYIEQRKTIKT) the chain is Extracellular. A helical transmembrane segment spans residues 1241-1259 (MLEYADKVFTYIFILEMLL). Over 1260 to 1273 (KWVAYGFQMYFTNA) the chain is Cytoplasmic. The chain crosses the membrane as a helical span at residues 1274 to 1292 (WCWLDFLIVDVSLVSLTAN). The Extracellular segment spans residues 1293 to 1300 (ALGYSELG). Residues 1301–1319 (AIKSLRTLRALRPLRALSR) traverse the membrane as a helical segment. The Cytoplasmic segment spans residues 1320–1336 (FEGMRVVVNALLGAIPS). Residues 1337 to 1356 (IMNVLLVCLIFWLIFSIMGV) traverse the membrane as a helical segment. Residues 1357–1408 (NLFAGKFYHCINYTTGEMFDVSVVNNYSECQALIESNQTARWKNVKVNFDNV) are Extracellular-facing. Cys-1366 and Cys-1386 are disulfide-bonded. N-linked (GlcNAc...) asparagine glycans are attached at residues Asn-1368, Asn-1382, and Asn-1393. An intramembrane region (pore-forming) is located at residues 1409 to 1430 (GLGYLSLLQVATFKGWMDIMYA). Residues 1431-1447 (AVDSRNVELQPKYEDNL) are Extracellular-facing. A helical transmembrane segment spans residues 1448–1469 (YMYLYFVIFIIFGSFFTLNLFI). Residues 1470–1532 (GVIIDNFNQQ…MVFDFVTKQV (63 aa)) are Cytoplasmic-facing. Phosphoserine; by PKC is present on Ser-1506. Residues 1513–1811 (IPRPANKFQG…WEKFDPDATQ (299 aa)) form an IV repeat. The helical transmembrane segment at 1533 to 1550 (FDISIMILICLNMVTMMV) threads the bilayer. At 1551 to 1561 (ETDDQSQEMTN) the chain is on the extracellular side. The helical transmembrane segment at 1562–1580 (ILYWINLVFIVLFTGECVL) threads the bilayer. Over 1581 to 1592 (KLISLRHYYFTI) the chain is Cytoplasmic. The helical transmembrane segment at 1593-1610 (GWNIFDFVVVILSIVGMF) threads the bilayer. At 1611–1623 (LAELIEKYFVSPT) the chain is on the extracellular side. The helical transmembrane segment at 1624 to 1640 (LFRVIRLARIGRILRLI) threads the bilayer. The Cytoplasmic segment spans residues 1641 to 1659 (KGAKGIRTLLFALMMSLPA). The chain crosses the membrane as a helical span at residues 1660 to 1677 (LFNIGLLLFLVMFIYAIF). Over 1678–1699 (GMSNFAYVKREVGIDDMFNFET) the chain is Extracellular. The segment at residues 1700-1722 (FGNSMICLFQITTSAGWDGLLAP) is an intramembrane region (pore-forming). The Extracellular portion of the chain corresponds to 1723–1752 (ILNSGPPDCDPEKDHPGSSVKGDCGNPSVG). Cys-1731 and Cys-1746 are oxidised to a cystine. Residues 1753–1775 (IFFFVSYIIISFLVVVNMYIAVI) form a helical membrane-spanning segment. Residues 1776–2005 (LENFSVATEE…KGKDIRESKK (230 aa)) are Cytoplasmic-facing. Residues 1905–1934 (EEVSAIVIQRAYRRYLLKQKVKKVSSIYKK) enclose the IQ domain. Ser-1930 is subject to Phosphoserine. Residues 1933-1964 (KKDKGKEDEGTPIKEDIITDKLNENSTPEKTD) are compositionally biased toward basic and acidic residues. A disordered region spans residues 1933–2005 (KKDKGKEDEG…KGKDIRESKK (73 aa)). Phosphothreonine is present on residues Thr-1943, Thr-1963, and Thr-1966. Ser-1971 is subject to Phosphoserine. A compositionally biased stretch (basic and acidic residues) spans 1979-2005 (TKPEKEKFEKDKSEKEDKGKDIRESKK).

Belongs to the sodium channel (TC 1.A.1.10) family. Nav1.2/SCN2A subfamily. Heterooligomer of a large alpha subunit and a smaller beta subunit. Heterooligomer with SCN2B or SCN4B; disulfide-linked. Heterooligomer with SCN1B or SCN3B; non-covalently linked. Interacts with NEDD4L. Interacts with CALM. Interacts with TMEM233. Interacts with the conotoxin GVIIJ. Interacts with the scorpion toxin BMK M1. In terms of processing, may be ubiquitinated by NEDD4L; which would promote its endocytosis. Post-translationally, phosphorylation at Ser-1506 by PKC in a highly conserved cytoplasmic loop slows inactivation of the sodium channel and reduces peak sodium currents. Sumoylated at Lys-38. Sumoylation is induced by hypoxia, increases voltage-gated sodium current and mediates the early response to acute hypoxia in neurons. Sumoylated SCN2A is located at the cell membrane. Expressed in brain (at protein level). Expressed in cerebellar granule neurons (at protein level).

It localises to the cell membrane. It catalyses the reaction Na(+)(in) = Na(+)(out). Functionally, mediates the voltage-dependent sodium ion permeability of excitable membranes. Assuming opened or closed conformations in response to the voltage difference across the membrane, the protein forms a sodium-selective channel through which Na(+) ions may pass in accordance with their electrochemical gradient. Implicated in the regulation of hippocampal replay occurring within sharp wave ripples (SPW-R) important for memory. In Rattus norvegicus (Rat), this protein is Sodium channel protein type 2 subunit alpha.